A 198-amino-acid chain; its full sequence is Ion-translocating oxidoreductase complex subunit B (198 aa).

The interval 1–26 (MTTIMIAVLAIALLATLFGAILGFAS) is hydrophobic. One can recognise a 4Fe-4S domain in the interval 32–90 (EADPIVDQIDAILPQTQCGQCGYPGCRPYAEAIANGDSINKCPPGGQATIEKLADLMGV). [4Fe-4S] cluster-binding residues include C49, C52, C57, C73, C114, C117, C120, C124, C144, C147, C150, and C154. 2 consecutive 4Fe-4S ferredoxin-type domains span residues 105–134 (KVAF…GGTK) and 135–164 (ALHT…MIPL).

The protein belongs to the 4Fe4S bacterial-type ferredoxin family. RnfB subfamily. As to quaternary structure, the complex is composed of six subunits: RnfA, RnfB, RnfC, RnfD, RnfE and RnfG. [4Fe-4S] cluster serves as cofactor.

It is found in the cell inner membrane. Functionally, part of a membrane-bound complex that couples electron transfer with translocation of ions across the membrane. The sequence is that of Ion-translocating oxidoreductase complex subunit B from Vibrio vulnificus (strain CMCP6).